The following is a 330-amino-acid chain: Aspartate--ammonia ligase (330 aa).

The protein belongs to the class-II aminoacyl-tRNA synthetase family. AsnA subfamily.

It is found in the cytoplasm. It catalyses the reaction L-aspartate + NH4(+) + ATP = L-asparagine + AMP + diphosphate + H(+). The protein operates within amino-acid biosynthesis; L-asparagine biosynthesis; L-asparagine from L-aspartate (ammonia route): step 1/1. This is Aspartate--ammonia ligase from Pectobacterium carotovorum subsp. carotovorum (strain PC1).